The chain runs to 338 residues: Large ribosomal subunit protein uL10 (338 aa).

Over residues 298–308 the composition is skewed to low complexity; sequence AAQQTQTQQST. Residues 298–338 are disordered; the sequence is AAQQTQTQQSTAEEKKEEKKEEEKKGPSEEEIGSGLASLFG. Residues 309–325 show a composition bias toward basic and acidic residues; the sequence is AEEKKEEKKEEEKKGPS.

This sequence belongs to the universal ribosomal protein uL10 family. In terms of assembly, part of the 50S ribosomal subunit. Forms part of the ribosomal stalk which helps the ribosome interact with GTP-bound translation factors. Forms a heptameric L10(L12)2(L12)2(L12)2 complex, where L10 forms an elongated spine to which the L12 dimers bind in a sequential fashion.

Functionally, forms part of the ribosomal stalk, playing a central role in the interaction of the ribosome with GTP-bound translation factors. This Saccharolobus islandicus (strain M.16.27) (Sulfolobus islandicus) protein is Large ribosomal subunit protein uL10.